Here is a 209-residue protein sequence, read N- to C-terminus: Small ribosomal subunit protein uS4 (209 aa).

The segment at 22 to 45 (RGRNPLLRKPNPPGQHGMQRKKKS) is disordered. Residues 93 to 154 (CRLDNIVYRL…KSRRLAIVTE (62 aa)) form the S4 RNA-binding domain.

Belongs to the universal ribosomal protein uS4 family. As to quaternary structure, part of the 30S ribosomal subunit. Contacts protein S5. The interaction surface between S4 and S5 is involved in control of translational fidelity.

Functionally, one of the primary rRNA binding proteins, it binds directly to 16S rRNA where it nucleates assembly of the body of the 30S subunit. In terms of biological role, with S5 and S12 plays an important role in translational accuracy. The protein is Small ribosomal subunit protein uS4 of Chlamydia muridarum (strain MoPn / Nigg).